A 165-amino-acid polypeptide reads, in one-letter code: SsrA-binding protein (165 aa).

The tract at residues 141–165 (KLHDKRQEEKRKQADREVKSALARY) is disordered. The segment covering 145-159 (KRQEEKRKQADREVK) has biased composition (basic and acidic residues).

This sequence belongs to the SmpB family.

Its subcellular location is the cytoplasm. Its function is as follows. Required for rescue of stalled ribosomes mediated by trans-translation. Binds to transfer-messenger RNA (tmRNA), required for stable association of tmRNA with ribosomes. tmRNA and SmpB together mimic tRNA shape, replacing the anticodon stem-loop with SmpB. tmRNA is encoded by the ssrA gene; the 2 termini fold to resemble tRNA(Ala) and it encodes a 'tag peptide', a short internal open reading frame. During trans-translation Ala-aminoacylated tmRNA acts like a tRNA, entering the A-site of stalled ribosomes, displacing the stalled mRNA. The ribosome then switches to translate the ORF on the tmRNA; the nascent peptide is terminated with the 'tag peptide' encoded by the tmRNA and targeted for degradation. The ribosome is freed to recommence translation, which seems to be the essential function of trans-translation. The polypeptide is SsrA-binding protein (Prochlorococcus marinus (strain MIT 9303)).